Consider the following 147-residue polypeptide: MSAPTTPAAALDDVEEGVVLRPKFDAAGLVTCVTTDAQSGDVLMVAFMNDEALKKTIDSGEAWYFSRSRGRLWRKGESSGHVQRVLEIRVDCDQDAVWIKVEQGGGAACHTGRKSCFYRRVDRDAEGAPLLSPVDAERLFDPAKVYR.

Residue aspartate 91 participates in Mg(2+) binding. Residue cysteine 92 participates in Zn(2+) binding. Positions 93 and 95 each coordinate Mg(2+). Positions 109 and 116 each coordinate Zn(2+).

This sequence belongs to the PRA-CH family. As to quaternary structure, homodimer. It depends on Mg(2+) as a cofactor. Requires Zn(2+) as cofactor.

The protein localises to the cytoplasm. It catalyses the reaction 1-(5-phospho-beta-D-ribosyl)-5'-AMP + H2O = 1-(5-phospho-beta-D-ribosyl)-5-[(5-phospho-beta-D-ribosylamino)methylideneamino]imidazole-4-carboxamide. Its pathway is amino-acid biosynthesis; L-histidine biosynthesis; L-histidine from 5-phospho-alpha-D-ribose 1-diphosphate: step 3/9. In terms of biological role, catalyzes the hydrolysis of the adenine ring of phosphoribosyl-AMP. In Rhodopseudomonas palustris (strain BisB18), this protein is Phosphoribosyl-AMP cyclohydrolase.